An 81-amino-acid polypeptide reads, in one-letter code: MSHSVKIYDTCIGCTQCVRACPTDVLEMIPWDRCKAKQIASAPRTEDCVGCKRCESACPTDFLSVRVYLGHETTRSMGLTY.

4Fe-4S ferredoxin-type domains follow at residues 2 to 31 (SHSV…MIPW) and 39 to 68 (IASA…VRVY). [4Fe-4S] cluster is bound by residues cysteine 11, cysteine 14, cysteine 17, cysteine 21, cysteine 48, cysteine 51, cysteine 54, and cysteine 58.

In terms of assembly, the eukaryotic PSI reaction center is composed of at least 11 subunits. Requires [4Fe-4S] cluster as cofactor.

Its subcellular location is the plastid thylakoid membrane. It carries out the reaction reduced [plastocyanin] + hnu + oxidized [2Fe-2S]-[ferredoxin] = oxidized [plastocyanin] + reduced [2Fe-2S]-[ferredoxin]. In terms of biological role, apoprotein for the two 4Fe-4S centers FA and FB of photosystem I (PSI); essential for photochemical activity. FB is the terminal electron acceptor of PSI, donating electrons to ferredoxin. The C-terminus interacts with PsaA/B/D and helps assemble the protein into the PSI complex. Required for binding of PsaD and PsaE to PSI. PSI is a plastocyanin-ferredoxin oxidoreductase, converting photonic excitation into a charge separation, which transfers an electron from the donor P700 chlorophyll pair to the spectroscopically characterized acceptors A0, A1, FX, FA and FB in turn. This chain is Photosystem I iron-sulfur center, found in Cuscuta reflexa (Southern Asian dodder).